The following is a 143-amino-acid chain: Putative glycerol transporter Lin0368 (143 aa).

4 helical membrane-spanning segments follow: residues 6 to 26 (GMIG…PLAE), 27 to 47 (NYGI…MWFM), 60 to 80 (AAFV…DVFM), and 90 to 110 (LPTI…AAAI). The segment at 118–143 (HEAKQEKTEPGMNIKEEERLNENQLV) is disordered.

It localises to the membrane. In terms of biological role, could be involved in the glycerol uptake either via facilitated diffusion or active transport. The sequence is that of Putative glycerol transporter Lin0368 from Listeria innocua serovar 6a (strain ATCC BAA-680 / CLIP 11262).